Consider the following 204-residue polypeptide: Oxidoreductase iacF (204 aa).

Belongs to the oxidoreductase OpS7 family.

It participates in secondary metabolite biosynthesis. In terms of biological role, oxidoreductase; part of the gene cluster that mediates the biosynthesis of iso-A82775C, a enylepoxycyclohexane and biosynthetic precursor of the chloropestolide anticancer natural products. Within the cluster, the prenyltransferase iacE prenylates siccayne to generate pestalodiol E, using dimethylallyl diphosphate (DMAPP) as cosubstrate. The probable oxidoreductase iacF is then involved in the epoxidation of pestalodiol F to pestalodiol F, which is further converted to pestalofone A by the short-chain dehydrogenase/reductase iacG. Iso-A82775C is subsequently generated from pestalofone A by the short-chain dehydrogenase/reductase iacC. Iso-A82775C is further condensed with maldoxin via a Diels-Alder reaction to produce the anticancer natural products chloropestolides A to E. The sequence is that of Oxidoreductase iacF from Pestalotiopsis fici (strain W106-1 / CGMCC3.15140).